Here is a 120-residue protein sequence, read N- to C-terminus: Large ribosomal subunit protein uL18 (120 aa).

Belongs to the universal ribosomal protein uL18 family. Part of the 50S ribosomal subunit; part of the 5S rRNA/L5/L18/L25 subcomplex. Contacts the 5S and 23S rRNAs.

This is one of the proteins that bind and probably mediate the attachment of the 5S RNA into the large ribosomal subunit, where it forms part of the central protuberance. The sequence is that of Large ribosomal subunit protein uL18 from Bacillus licheniformis (strain ATCC 14580 / DSM 13 / JCM 2505 / CCUG 7422 / NBRC 12200 / NCIMB 9375 / NCTC 10341 / NRRL NRS-1264 / Gibson 46).